The chain runs to 279 residues: 3-methyl-2-oxobutanoate hydroxymethyltransferase (279 aa).

The Mg(2+) site is built by Asp44 and Asp83. 3-methyl-2-oxobutanoate-binding positions include 44–45 (DS), Asp83, and Lys113. Glu115 is a Mg(2+) binding site. The active-site Proton acceptor is the Glu182.

This sequence belongs to the PanB family. Homodecamer; pentamer of dimers. Mg(2+) is required as a cofactor.

The protein localises to the cytoplasm. It catalyses the reaction 3-methyl-2-oxobutanoate + (6R)-5,10-methylene-5,6,7,8-tetrahydrofolate + H2O = 2-dehydropantoate + (6S)-5,6,7,8-tetrahydrofolate. The protein operates within cofactor biosynthesis; (R)-pantothenate biosynthesis; (R)-pantoate from 3-methyl-2-oxobutanoate: step 1/2. In terms of biological role, catalyzes the reversible reaction in which hydroxymethyl group from 5,10-methylenetetrahydrofolate is transferred onto alpha-ketoisovalerate to form ketopantoate. The chain is 3-methyl-2-oxobutanoate hydroxymethyltransferase from Desulfotalea psychrophila (strain LSv54 / DSM 12343).